The primary structure comprises 358 residues: Putative glycylpeptide N-tetradecanoyltransferase (358 aa).

Belongs to the NMT family.

The catalysed reaction is N-terminal glycyl-[protein] + tetradecanoyl-CoA = N-tetradecanoylglycyl-[protein] + CoA + H(+). Adds a myristoyl group to the N-terminal glycine residue of certain proteins. This chain is Putative glycylpeptide N-tetradecanoyltransferase, found in Acanthamoeba polyphaga (Amoeba).